Consider the following 475-residue polypeptide: Ankyrin repeat, SAM and basic leucine zipper domain-containing protein 1 (475 aa).

The tract at residues 1-23 (MAAARFRGLAVAGGGESSESEDD) is disordered. Phosphoserine is present on residues serine 17, serine 18, and serine 20. ANK repeat units follow at residues 45–74 (EKNETFKRALTAGDVALVEELLDSGISVDS), 78–107 (YGWTPLMYAASVSNVDLVRVLLDRGAKASF), 110–144 (DKQTILITACSARGSEEQILKCVELLLSRNADPNV), 148–177 (RLMTPIMYAARDGHPQVVALLVAHGAEVNT), 181–210 (NGYTALTWAARQGHKNVVLKLLELGANKML), and 214–243 (DGKTPSEIAKRNKHLEIFNFLSLTLNPLEG). In terms of domain architecture, SAM spans 272 to 334 (SYTAFGDLEI…KILAALKELE (63 aa)).

In terms of assembly, interacts with DDX4, PIWIL1, RANBP9 and TDRD1.

It is found in the cytoplasm. In terms of biological role, plays a central role during spermatogenesis by repressing transposable elements and preventing their mobilization, which is essential for the germline integrity. Acts via the piRNA metabolic process, which mediates the repression of transposable elements during meiosis by forming complexes composed of piRNAs and Piwi proteins and governs the methylation and subsequent repression of transposons. Its association with pi-bodies suggests a participation in the primary piRNAs metabolic process. Required prior to the pachytene stage to facilitate the production of multiple types of piRNAs, including those associated with repeats involved in the regulation of retrotransposons. May act by mediating protein-protein interactions during germ cell maturation. This is Ankyrin repeat, SAM and basic leucine zipper domain-containing protein 1 (ASZ1) from Equus caballus (Horse).